A 733-amino-acid polypeptide reads, in one-letter code: Ribosomal protein S6 kinase 2 alpha (733 aa).

The tract at residues Glu18 to Glu38 is disordered. Positions Phe62 to Phe321 constitute a Protein kinase 1 domain. ATP contacts are provided by residues Leu68 to Val76 and Lys94. Asp187 functions as the Proton acceptor in the catalytic mechanism. Ser221 is subject to Phosphoserine. An AGC-kinase C-terminal domain is found at Ser322–Ala391. The residue at position 359 (Thr359) is a Phosphothreonine. A Phosphoserine modification is found at Ser363. Position 380 is a phosphoserine; by autocatalysis (Ser380). A Protein kinase 2 domain is found at Tyr416 to Ile673. ATP is bound by residues Ile422–Cys430 and Lys445. Residue Asp533 is the Proton acceptor of the active site. Thr571 carries the post-translational modification Phosphothreonine. The residue at position 730 (Ser730) is a Phosphoserine.

The protein belongs to the protein kinase superfamily. AGC Ser/Thr protein kinase family. S6 kinase subfamily. The cofactor is Mg(2+). In terms of processing, autophosphorylated on Ser-380, as part of the activation process.

It catalyses the reaction L-seryl-[protein] + ATP = O-phospho-L-seryl-[protein] + ADP + H(+). The enzyme catalyses L-threonyl-[protein] + ATP = O-phospho-L-threonyl-[protein] + ADP + H(+). Activated by multiple phosphorylations on threonine and serine residues. Serine/threonine kinase that may play a role in mediating the growth-factor and stress induced activation of transcription. This is Ribosomal protein S6 kinase 2 alpha (rps6ka) from Xenopus laevis (African clawed frog).